Reading from the N-terminus, the 339-residue chain is Glycerol-3-phosphate dehydrogenase [NAD(P)+] (339 aa).

Residues serine 31, tryptophan 32, arginine 52, and lysine 122 each contribute to the NADPH site. Sn-glycerol 3-phosphate contacts are provided by lysine 122 and glycine 152. Alanine 156 is a binding site for NADPH. Residues lysine 207, aspartate 260, serine 270, arginine 271, and asparagine 272 each coordinate sn-glycerol 3-phosphate. Residue lysine 207 is the Proton acceptor of the active site. Arginine 271 lines the NADPH pocket. Glutamate 293 lines the NADPH pocket.

This sequence belongs to the NAD-dependent glycerol-3-phosphate dehydrogenase family.

It localises to the cytoplasm. The enzyme catalyses sn-glycerol 3-phosphate + NAD(+) = dihydroxyacetone phosphate + NADH + H(+). It catalyses the reaction sn-glycerol 3-phosphate + NADP(+) = dihydroxyacetone phosphate + NADPH + H(+). Its pathway is membrane lipid metabolism; glycerophospholipid metabolism. In terms of biological role, catalyzes the reduction of the glycolytic intermediate dihydroxyacetone phosphate (DHAP) to sn-glycerol 3-phosphate (G3P), the key precursor for phospholipid synthesis. The polypeptide is Glycerol-3-phosphate dehydrogenase [NAD(P)+] (Tropheryma whipplei (strain Twist) (Whipple's bacillus)).